Here is a 338-residue protein sequence, read N- to C-terminus: Anthranilate phosphoribosyltransferase (338 aa).

5-phospho-alpha-D-ribose 1-diphosphate contacts are provided by residues Gly82, 85 to 86 (GD), Thr90, 92 to 95 (NIST), 110 to 118 (KHGNRAASS), and Ser122. Gly82 is an anthranilate binding site. Ser94 is a binding site for Mg(2+). Asn113 provides a ligand contact to anthranilate. Arg168 serves as a coordination point for anthranilate. Mg(2+)-binding residues include Asp226 and Glu227.

This sequence belongs to the anthranilate phosphoribosyltransferase family. Homodimer. Mg(2+) is required as a cofactor.

The catalysed reaction is N-(5-phospho-beta-D-ribosyl)anthranilate + diphosphate = 5-phospho-alpha-D-ribose 1-diphosphate + anthranilate. The protein operates within amino-acid biosynthesis; L-tryptophan biosynthesis; L-tryptophan from chorismate: step 2/5. Catalyzes the transfer of the phosphoribosyl group of 5-phosphorylribose-1-pyrophosphate (PRPP) to anthranilate to yield N-(5'-phosphoribosyl)-anthranilate (PRA). This is Anthranilate phosphoribosyltransferase from Deinococcus radiodurans (strain ATCC 13939 / DSM 20539 / JCM 16871 / CCUG 27074 / LMG 4051 / NBRC 15346 / NCIMB 9279 / VKM B-1422 / R1).